The sequence spans 121 residues: Small ribosomal subunit protein uS13 (121 aa).

Positions 91 to 121 are disordered; the sequence is HRRGLPVRGQKTKNNARTRKGPVKTVANKKK.

The protein belongs to the universal ribosomal protein uS13 family. In terms of assembly, part of the 30S ribosomal subunit. Forms a loose heterodimer with protein S19. Forms two bridges to the 50S subunit in the 70S ribosome.

Functionally, located at the top of the head of the 30S subunit, it contacts several helices of the 16S rRNA. In the 70S ribosome it contacts the 23S rRNA (bridge B1a) and protein L5 of the 50S subunit (bridge B1b), connecting the 2 subunits; these bridges are implicated in subunit movement. Contacts the tRNAs in the A and P-sites. This is Small ribosomal subunit protein uS13 from Staphylococcus aureus (strain Mu3 / ATCC 700698).